Reading from the N-terminus, the 345-residue chain is uncharacterized protein (345 aa).

This is an uncharacterized protein from Archaeoglobus fulgidus (strain ATCC 49558 / DSM 4304 / JCM 9628 / NBRC 100126 / VC-16).